Reading from the N-terminus, the 186-residue chain is Orotate phosphoribosyltransferase (186 aa).

5-phospho-alpha-D-ribose 1-diphosphate-binding positions include R96, K100, H102, and 121–129; that span reads DDVATTGTS. Positions 125 and 153 each coordinate orotate.

The protein belongs to the purine/pyrimidine phosphoribosyltransferase family. PyrE subfamily. As to quaternary structure, homodimer. It depends on Mg(2+) as a cofactor.

The catalysed reaction is orotidine 5'-phosphate + diphosphate = orotate + 5-phospho-alpha-D-ribose 1-diphosphate. The protein operates within pyrimidine metabolism; UMP biosynthesis via de novo pathway; UMP from orotate: step 1/2. In terms of biological role, catalyzes the transfer of a ribosyl phosphate group from 5-phosphoribose 1-diphosphate to orotate, leading to the formation of orotidine monophosphate (OMP). The chain is Orotate phosphoribosyltransferase from Aeropyrum pernix (strain ATCC 700893 / DSM 11879 / JCM 9820 / NBRC 100138 / K1).